The chain runs to 71 residues: Guanine nucleotide-binding protein G(I)/G(S)/G(O) subunit gamma-2 (71 aa).

Ala-2 carries the N-acetylalanine modification. Cys-68 is subject to Cysteine methyl ester. Cys-68 carries the S-geranylgeranyl cysteine lipid modification. Positions Ala-69–Leu-71 are cleaved as a propeptide — removed in mature form.

Belongs to the G protein gamma family. G proteins are composed of 3 units, alpha, beta and gamma. In this context, interacts with GNB2. The heterodimer formed by GNB1 and GNG2 interacts with ARHGEF5. The heterodimer formed by GNB1 and GNG2 interacts with GRK2. Component of the TAS2R14-GNAI1 complex, consisting of TAS2R14, GNAI1, GNB1 and GNG2. Forms complexes with TAS2R14 and G-proteins; these complexes play a role in the perception of bitterness. Component of the TAS2R14-GNAT3 complex, consisting of TAS2R14, GNAT3, GNB1 and GNG2. Component of the TAS2R14-GNAS2 complex, consisting of TAS2R14, GNAS2, GNB1 and GNG2. As to expression, adrenal gland and brain.

Its subcellular location is the cell membrane. Its function is as follows. Guanine nucleotide-binding proteins (G proteins) are involved as a modulator or transducer in various transmembrane signaling systems. The beta and gamma chains are required for the GTPase activity, for replacement of GDP by GTP, and for G protein-effector interaction. This Bos taurus (Bovine) protein is Guanine nucleotide-binding protein G(I)/G(S)/G(O) subunit gamma-2 (GNG2).